The sequence spans 245 residues: 8-amino-3,8-dideoxy-manno-octulosonate cytidylyltransferase (245 aa).

The protein belongs to the KdsB family.

The protein localises to the cytoplasm. The enzyme catalyses 8-amino-3,8-dideoxy-alpha-D-manno-octulosonate + CTP = CMP-8-amino-3,8-dideoxy-alpha-D-manno-oct-2-ulosonate + diphosphate. It functions in the pathway bacterial outer membrane biogenesis; lipopolysaccharide biosynthesis. Activates KDO8N (a required 8-carbon sugar) for incorporation into bacterial lipopolysaccharide in the Shewanella genus. The chain is 8-amino-3,8-dideoxy-manno-octulosonate cytidylyltransferase from Shewanella frigidimarina (strain NCIMB 400).